Reading from the N-terminus, the 818-residue chain is Rho GTPase-activating protein 44 (818 aa).

In terms of domain architecture, BAR spans 14 to 249; it reads QTVGRAEKTE…IKAQQEAWVE (236 aa). In terms of domain architecture, Rho-GAP spans 255-445; it reads KPLEEHLTIS…PIIQHADWFF (191 aa). 3 disordered regions span residues 467 to 493, 530 to 772, and 789 to 818; these read ANYS…RPLS, SSAG…SMST, and TLRL…STAL. Residues 479–489 are compositionally biased toward basic and acidic residues; sequence PADRRQPEQAR. S493 carries the post-translational modification Phosphoserine. Positions 563–579 are enriched in low complexity; it reads QPLDSPAAPALSPSGLG. The segment covering 598 to 611 has biased composition (polar residues); sequence GSAQKGSPGSSQGT. Low complexity-rich tracts occupy residues 614 to 641 and 688 to 708; these read AGTQ…DQSP and SPYG…LSPA. An interaction with BST2 region spans residues 731-818; sequence KPRQRPTLPP…SEEESESTAL (88 aa). The segment covering 746-757 has biased composition (polar residues); the sequence is VNLSASSPQSTE. The short motif at 764-767 is the PDZ-binding element; sequence MSPG. Over residues 794-809 the composition is skewed to basic and acidic residues; sequence PLEHMRRHSVTDKRDS. S809 is modified (phosphoserine). The PDZ-binding signature appears at 815–818; sequence STAL.

As to quaternary structure, interacts with BST2 (via cytoplasmic domain). Interacts (probably via PDZ-binding motif) with SHANK3 (via PDZ domain); the interaction takes place in dendritic spines and promotes GRIA1 exocytosis. Highly expressed in brain. Expressed at weak level in other tissues.

It localises to the cell projection. The protein localises to the dendritic spine. The protein resides in the recycling endosome. Its subcellular location is the presynapse. It is found in the dendrite. GTPase-activating protein (GAP) that stimulates the GTPase activity of Rho-type GTPases. Thereby, controls Rho-type GTPases cycling between their active GTP-bound and inactive GDP-bound states. Acts as a GAP at least for CDC42 and RAC1. In neurons, is involved in dendritic spine formation and synaptic plasticity in a specific RAC1-GAP activity. Limits the initiation of exploratory dendritic filopodia. Recruited to actin-patches that seed filopodia, binds specifically to plasma membrane sections that are deformed inward by acto-myosin mediated contractile forces. Acts through GAP activity on RAC1 to reduce actin polymerization necessary for filopodia formation. In association with SHANK3, promotes GRIA1 exocytosis from recycling endosomes and spine morphological changes associated to long-term potentiation. The polypeptide is Rho GTPase-activating protein 44 (Homo sapiens (Human)).